A 404-amino-acid polypeptide reads, in one-letter code: Type I restriction enzyme EcoR124I/EcoR124II specificity subunit (404 aa).

Residues M1–K153 form a target-recognition domain 1 region. A conserved region 1 region spans residues S154 to G199. Residues E200–P349 are target-recognition domain 2. Residues N350–N404 are conserved region 2.

This sequence belongs to the type-I restriction system S methylase family. The type I restriction/modification system is composed of three polypeptides R, M and S; the restriction enzyme has stoichiometry R(2)M(2)S(1) while the methyltransferase is M(2)S(1). There is an equilibrium between R(2)M(2)S(1) and R(1)M(2)S(1); the latter is methylation and translocation proficient but restriction deficient. In terms of assembly, (Microbial infection) Holoenenzyme interacts with Escherichia phage T7 protein Ocr; this interaction leads to the inhibition of the restriction activity, but may still allow methylation and translocation.

In terms of biological role, the specificity (S) subunit of a type I restriction enzyme; this subunit dictates DNA sequence specificity. The presence or absence of a 4-residue repeat changes the sequence specificity; a third copy of TAEL inserted at position 179-180 changes the recognition site from 5'-GAAN(6)RTCG-3' (for EcoR124I) to 5'-GAAN(7)RTCG-3' (for EcoR124II). The M and S subunits together form a methyltransferase (MTase) that methylates A-3 on the top and bottom strand of the sequence 5'-GAAN(7)RTCG-3'. In the presence of the R subunit the complex can also act as an endonuclease, binding to the same target sequence but cutting the DNA some distance from this site. Whether the DNA is cut or modified depends on the methylation state of the target sequence. When the target site is unmodified, the DNA is cut. When the target site is hemimethylated, the complex acts as a maintenance MTase modifying the DNA so that both strands become methylated. After locating a non-methylated recognition site, the enzyme complex serves as a molecular motor that translocates DNA in an ATP-dependent manner until a collision occurs that triggers cleavage. The R(1)M(2)S(1) complex translocates an average of 555 bp/second on nicked DNA; the R(2)M(2)S(1) complex translocates at double that speed. The 2 R subunit motors are independent and track along the helical pitch of the DNA, inducing positive supercoiling ahead of themselves. The polypeptide is Type I restriction enzyme EcoR124I/EcoR124II specificity subunit (hsdS) (Escherichia coli).